Here is a 926-residue protein sequence, read N- to C-terminus: LPS-assembly protein LptD (926 aa).

A signal peptide spans 1 to 22 (MALKSPAFRKKFPLLVTGSLLA). Residues 55–91 (AAAVDLPPRPVHDTTSVSSNGTVTSQGTSSGEQSAGT) are disordered. Residues 68–91 (TTSVSSNGTVTSQGTSSGEQSAGT) are compositionally biased toward low complexity.

It belongs to the LptD family. In terms of assembly, component of the lipopolysaccharide transport and assembly complex. Interacts with LptE and LptA.

It is found in the cell outer membrane. Functionally, together with LptE, is involved in the assembly of lipopolysaccharide (LPS) at the surface of the outer membrane. The chain is LPS-assembly protein LptD from Pseudomonas syringae pv. syringae (strain B728a).